The sequence spans 127 residues: Turripeptide OL172 (127 aa).

Residues Met1–Thr20 form the signal peptide. Residues Gln42–Arg43 constitute a propeptide that is removed on maturation. Gln44 is modified (pyrrolidone carboxylic acid). Positions Gln73–Lys75 are excised as a propeptide. The residue at position 76 (Gln76) is a Pyrrolidone carboxylic acid. The propeptide occupies Gln104–Lys106. Gln107 carries the pyrrolidone carboxylic acid modification.

The turripeptide OL172 conotoxin-like contains 2 disulfide bonds. Expressed by the venom duct.

It localises to the secreted. Functionally, acts as a neurotoxin by inhibiting an ion channel. The protein is Turripeptide OL172 of Iotyrris olangoensis (Sea snail).